The primary structure comprises 625 residues: Voltage-gated potassium channel KCNC4 (625 aa).

2 disordered regions span residues 1-24 (MISS…SKTC) and 65-86 (LADP…SSGS). The interval 1-28 (MISSVCVSSYRGRKSGNKPPSKTCLKEE) is inactivation gate. The Cytoplasmic portion of the chain corresponds to 1–227 (MISSVCVSSY…EDPYSSRAAR (227 aa)). Phosphoserine is present on residues Ser-8, Ser-9, Ser-15, and Ser-21. The segment covering 77–86 (DGGGAGSSGS) has biased composition (gly residues). 4 residues coordinate Zn(2+): His-117, Cys-123, Cys-144, and Cys-145. The chain crosses the membrane as a helical span at residues 228–248 (VVAFASLFFILVSITTFCLET). N-linked (GlcNAc...) asparagine glycosylation is found at Asn-257 and Asn-266. A helical membrane pass occupies residues 279–299 (EPILTYIEGVCVMWFTLEFLV). Residues 300-313 (RIVCCPDTLDFVKN) lie on the Cytoplasmic side of the membrane. Residues 314-334 (LLNIIDFVAILPFYLEVGLSG) traverse the membrane as a helical segment. A helical; Voltage-sensor membrane pass occupies residues 346–365 (FLRVVRFVRILRIFKLTRHF). At 366–381 (VGLRVLGHTLRASTNE) the chain is on the cytoplasmic side. A helical membrane pass occupies residues 382-402 (FLLLIIFLALGVLIFATMIYY). K(+) contacts are provided by Thr-437, Leu-438, Gly-439, and Tyr-440. Positions 437 to 442 (TLGYGD) match the Selectivity filter motif. Residues 453-473 (VGALCALAGVLTIAMPVPVIV) traverse the membrane as a helical segment. Residues 474 to 625 (NNFGMYYSLA…CVPVSHTCAL (152 aa)) lie on the Cytoplasmic side of the membrane. Residues 490 to 581 (PKKRKKHVPR…RRALRRSGTR (92 aa)) form a disordered region. Over residues 528-543 (AREEGMVERKRADSKQ) the composition is skewed to basic and acidic residues.

It belongs to the potassium channel family. C (Shaw) (TC 1.A.1.2) subfamily. Kv3.4/KCNC4 sub-subfamily. As to quaternary structure, homotetramer. Heterotetramer of potassium channel proteins. Phosphorylation of serine residues in the inactivation gate inhibits rapid channel closure.

It is found in the membrane. The catalysed reaction is K(+)(in) = K(+)(out). Functionally, voltage-gated potassium channel that opens in response to the voltage difference across the membrane, forming a potassium-selective channel through which potassium ions pass in accordance with their electrochemical gradient. The channel displays rapid activation and inactivation kinetics. This is Voltage-gated potassium channel KCNC4 from Rattus norvegicus (Rat).